The sequence spans 3176 residues: Large tegument protein deneddylase (3176 aa).

The segment covering 1 to 12 has biased composition (polar residues); sequence MSNGDWGQSQRP. The tract at residues 1–28 is disordered; it reads MSNGDWGQSQRPRGTGPMRGIRTMDVNA. The tract at residues 1–268 is deubiquitination activity; the sequence is MSNGDWGQSQ…YEANGSGFDL (268 aa). The 218-residue stretch at 41–258 folds into the Peptidase C76 domain; it reads LGTASCNQAH…MLEHYGVYDF (218 aa). Catalysis depends on residues C61, D193, and H195. The interval 319-342 is disordered; that stretch reads PAARYSPAKTNSPPPSPASAAPAS. 5 consecutive repeat copies span residues 335-339, 340-344, 345-349, 350-354, and 355-359. The interval 335-384 is 10 X 5 AA approximate repeats of P-A-S-A-A; that stretch reads PASAAPASAAPASAAPASAAPASAAQASVAPASVAPASAAPASAAPDSAA. The stretch at 360 to 364 is one 6; approximate repeat; it reads QASVA. A 7; approximate repeat occupies 365–369; the sequence is PASVA. Repeat copies occupy residues 370-374 and 375-379. The span at 376–386 shows a compositional bias: low complexity; the sequence is ASAAPDSAAPA. Disordered regions lie at residues 376-683, 928-950, 1170-1193, 1435-1461, 2610-3008, and 3023-3043; these read ASAA…GSGL, LLSG…SIYR, APIS…TPPL, LMET…RARE, GLVS…PGAR, and TYTV…KMPK. The stretch at 380–384 is one 10; approximate repeat; the sequence is PDSAA. Pro residues predominate over residues 457-488; that stretch reads PRPPVPPHRPPSAARLPPPVIPIPHQSPPASP. Residues 519 to 546 are compositionally biased toward low complexity; the sequence is AAPSNPEIPLTTPSPSPTAAAAPTATTL. The segment covering 579 to 636 has biased composition (pro residues); sequence APSPLLPQQQPPPSAAPAPSPLLPQQQPPPSAARAPSPLPPQQQPLPSATPAPPPAQQ. The interaction with inner tegument protein stretch occupies residues 581–611; sequence SPLLPQQQPPPSAAPAPSPLLPQQQPPPSAA. Positions 1170–1182 are enriched in low complexity; it reads APISPASPSATPA. Over residues 2619–2630 the composition is skewed to polar residues; that stretch reads SADNTPASSDRL. Low complexity predominate over residues 2643–2654; sequence EGSTTAESEASG. The span at 2738 to 2747 shows a compositional bias: pro residues; that stretch reads QPAPQQPPSS. Polar residues-rich tracts occupy residues 2761–2772 and 2811–2831; these read SPHSTPSTASGS and SAAS…SSQD. Residues 2839-2854 show a composition bias toward basic and acidic residues; it reads MQREKKQQGGREEAAE. Composition is skewed to low complexity over residues 2872–2886 and 2901–2912; these read APVV…ATPA and APALGSGLAAPA.

This sequence belongs to the herpesviridae large tegument protein family. In terms of assembly, interacts with host CUL1 and CUL4A; these interactions inhibit the E3 ligase activity of cullins. Interacts with inner tegument protein. Interacts with capsid vertex specific component CVC2. Interacts with the major capsid protein/MCP. Interacts with host TRIM25 and YWHAZ.

The protein localises to the virion tegument. Its subcellular location is the host cytoplasm. It is found in the host nucleus. The catalysed reaction is Thiol-dependent hydrolysis of ester, thioester, amide, peptide and isopeptide bonds formed by the C-terminal Gly of ubiquitin (a 76-residue protein attached to proteins as an intracellular targeting signal).. Its function is as follows. Large tegument protein that plays multiple roles in the viral cycle. During viral entry, remains associated with the capsid while most of the tegument is detached and participates in the capsid transport toward the host nucleus. Plays a role in the routing of the capsid at the nuclear pore complex and subsequent uncoating. Within the host nucleus, acts as a deneddylase and promotes the degradation of nuclear CRLs (cullin-RING ubiquitin ligases) and thereby stabilizes nuclear CRL substrates, while cytoplasmic CRLs remain unaffected. These modifications prevent host cell cycle S-phase progression and create a favorable environment allowing efficient viral genome replication. Participates later in the secondary envelopment of capsids. Indeed, plays a linker role for the association of the outer viral tegument to the capsids together with the inner tegument protein. Counteracts host TLR-mediated NF-kappa-B activation through both MYD88 and TICAM1-dependent pathways by interfering with 'Lys-63'- and 'Lys-48'-linked ubiquitination of signaling intermediates such as TRAF6 and IKBKG. Inhibits type I interferon production by forming a tri-molecular complex with host TRIM25 and 14-3-3 thereby promoting TRIM25 autoubiquitination and sequestration of the ligase into inactive protein aggregates. In turn, host RIGI is recruited to the complex but ubiquitination is severely impaired leading to inhibition of the pathway. Also catalyzes the removal of 'Lys-48'- and 'Lys-63'-linked ubiquitin chains on host TBK1 and STING1 suppressing cGAS-STING signaling in addition to the RIGI-MAVS pathway. Inhibits selective autophagy by deubiquitinating host SQSTM1. In turn, decreased SQSTM1 ubiquitination fails to recruit LC3 to SQSTM1-positive aggregates. In the host nucleus, deubiquitinates topoisomerase II subunits TOP2A and TOP2B thereby stabilizing SUMOylated TOP2 which halts the DNA damage response to TOP2-induced double strand DNA breaks and promotes cell survival. This is Large tegument protein deneddylase from Homo sapiens (Human).